The primary structure comprises 883 residues: 3-hydroxy-3-methylglutaryl-coenzyme A reductase (883 aa).

Residues 1–9 (MLSRLFRMH) are Cytoplasmic-facing. The chain crosses the membrane as a helical span at residues 10-39 (GQFVASHPWEVIVGTVTLTICMMSMNMFTG). Topologically, residues 40–56 (NDKICGWNYACPKFEED) are lumenal. Residues 57-78 (VLSSDIIILTITRCIAILYIYF) form a helical membrane-spanning segment. Topologically, residues 79–89 (QFQNLRQLGSK) are cytoplasmic. Residues 90–114 (YILGIAGLFTIFSSFVFSTVVIHFL) form a helical membrane-spanning segment. Topologically, residues 115-123 (DKELTGLNE) are lumenal. A helical membrane pass occupies residues 124-149 (ALPFFLLLIDLSKASALAKFALSSNS). Topologically, residues 150–159 (QDEVRDNIAR) are cytoplasmic. A helical membrane pass occupies residues 160–187 (GMAILGPTFTLEALVECLVIGVGTMSGV). Residues 188–191 (RQLE) are Lumenal-facing. Residues 192–220 (IMCCFGCMSVLANYFAFMTFFPACVSLVL) form a helical membrane-spanning segment. Residues 221–249 (ELSRESREGRPIWQLSQFASVLEEEEDNK) are Cytoplasmic-facing. Residues 250 to 276 (PNPVTQRVKMIMSLGLVLVHAHSRWIS) form a helical membrane-spanning segment. Over 277-316 (EPSSQNSTSISDHEVTTMLDDMMPKRVEPSMPLWQFYLSR) the chain is Lumenal. Residue Asn-282 is glycosylated (N-linked (GlcNAc...) asparagine). A helical transmembrane segment spans residues 317 to 341 (MVTMDVEQIITLGLALLLAVKYIFF). Topologically, residues 342–883 (EQTETESTFS…LPGTCTKKAA (542 aa)) are cytoplasmic. Residues 373-396 (REPEQEKTVHVSTTEEASSKEETE) are disordered. Residues Glu-554, Lys-686, and Asp-762 each act as charge relay system in the active site. Residue His-861 is the Proton donor of the active site.

Belongs to the HMG-CoA reductase family. Homotetramer. Homodimer.

It localises to the endoplasmic reticulum membrane. It is found in the peroxisome membrane. It carries out the reaction (R)-mevalonate + 2 NADP(+) + CoA = (3S)-3-hydroxy-3-methylglutaryl-CoA + 2 NADPH + 2 H(+). The protein operates within metabolic intermediate biosynthesis; (R)-mevalonate biosynthesis; (R)-mevalonate from acetyl-CoA: step 3/3. In terms of biological role, catalyzes the conversion of (3S)-hydroxy-3-methylglutaryl-CoA (HMG-CoA) to mevalonic acid, the rate-limiting step in the synthesis of cholesterol and other isoprenoids, thus plays a critical role in cellular cholesterol homeostasis. The polypeptide is 3-hydroxy-3-methylglutaryl-coenzyme A reductase (hmgcr) (Xenopus laevis (African clawed frog)).